The primary structure comprises 425 residues: Proline--tRNA ligase (425 aa).

It belongs to the class-II aminoacyl-tRNA synthetase family. ProS type 2 subfamily. In terms of assembly, homodimer.

The protein localises to the cytoplasm. It catalyses the reaction tRNA(Pro) + L-proline + ATP = L-prolyl-tRNA(Pro) + AMP + diphosphate. Functionally, catalyzes the attachment of proline to tRNA(Pro) in a two-step reaction: proline is first activated by ATP to form Pro-AMP and then transferred to the acceptor end of tRNA(Pro). In Anaplasma marginale (strain St. Maries), this protein is Proline--tRNA ligase.